We begin with the raw amino-acid sequence, 383 residues long: Chaperone protein DnaJ (383 aa).

The region spanning 5–70 (DYYEALGVAR…QKRAAYDQFG (66 aa)) is the J domain. The segment at 139-217 (GTEVQIRVPT…CGGRGRVQSQ (79 aa)) adopts a CR-type zinc-finger fold. C152, C155, C169, C172, C191, C194, C205, and C208 together coordinate Zn(2+). CXXCXGXG motif repeat units follow at residues 152–159 (CDACDGKG), 169–176 (CPTCKGHG), 191–198 (CPRCGGSG), and 205–212 (CRKCGGRG). The tract at residues 230–249 (TGDRIRLSGEGEPGENGGPP) is disordered.

The protein belongs to the DnaJ family. In terms of assembly, homodimer. The cofactor is Zn(2+).

It localises to the cytoplasm. Participates actively in the response to hyperosmotic and heat shock by preventing the aggregation of stress-denatured proteins and by disaggregating proteins, also in an autonomous, DnaK-independent fashion. Unfolded proteins bind initially to DnaJ; upon interaction with the DnaJ-bound protein, DnaK hydrolyzes its bound ATP, resulting in the formation of a stable complex. GrpE releases ADP from DnaK; ATP binding to DnaK triggers the release of the substrate protein, thus completing the reaction cycle. Several rounds of ATP-dependent interactions between DnaJ, DnaK and GrpE are required for fully efficient folding. Also involved, together with DnaK and GrpE, in the DNA replication of plasmids through activation of initiation proteins. The chain is Chaperone protein DnaJ from Alkalilimnicola ehrlichii (strain ATCC BAA-1101 / DSM 17681 / MLHE-1).